Reading from the N-terminus, the 266-residue chain is Single-stranded DNA-binding protein WHY1, chloroplastic (266 aa).

The transit peptide at 1–37 (MPPPAPLFLSLASTPPPALMPVHHPRAPQSLTLVPPV) directs the protein to the chloroplast. Residues 53 to 81 (SPRHSDYFDPRAPPPPRGDGGYGRPPNGA) form a disordered region. Residues 94–99 (KGKAAL) are required for ssDNA binding. A Nuclear localization signal motif is present at residues 172–185 (KGRSEEGKVRKVLK).

Belongs to the Whirly family. As to quaternary structure, homotetramer.

It localises to the plastid. The protein localises to the chloroplast stroma. It is found in the nucleus. In terms of biological role, single-stranded DNA and RNA binding protein that maintains plastid genome stability by preventing break-induced and short homology-dependent illegitimate recombinations. Functions in RNA metabolism and is involved in the maturation of the atpF and 23S ribosomal RNAs. The polypeptide is Single-stranded DNA-binding protein WHY1, chloroplastic (WHY1) (Zea mays (Maize)).